Here is a 1020-residue protein sequence, read N- to C-terminus: Sodium/potassium-transporting ATPase subunit alpha-2 (1020 aa).

Residues 1 to 5 (MGRGA) constitute a propeptide that is removed on maturation. Residues 1–31 (MGRGAGREYSPAATTAENGGGKKKQKEKELD) are disordered. Residues 6–85 (GREYSPAATT…NALTPPPTTP (80 aa)) are Cytoplasmic-facing. Ser10 carries the phosphoserine modification. Residues 80–82 (PPP) are interaction with phosphoinositide-3 kinase. Residues 86 to 106 (EWVKFCRQLFGGFSILLWIGA) traverse the membrane as a helical segment. At 107 to 129 (LLCFLAYGILAAMEDEPSNDNLY) the chain is on the extracellular side. The chain crosses the membrane as a helical span at residues 130–150 (LGIVLAAVVIVTGCFSYYQEA). The Cytoplasmic portion of the chain corresponds to 151 to 286 (KSSKIMDSFK…VGQTPIAMEI (136 aa)). The span at 212–227 (DNSSLTGESEPQTRSP) shows a compositional bias: polar residues. The tract at residues 212–231 (DNSSLTGESEPQTRSPEFTH) is disordered. The helical transmembrane segment at 287–306 (EHFIQLITGVAVFLGVSFFV) threads the bilayer. Topologically, residues 307–318 (LSLILGYSWLEA) are extracellular. Residues 319-336 (VIFLIGIIVANVPEGLLA) form a helical membrane-spanning segment. Residues 337-769 (TVTVCLTLTA…EEGRLIFDNL (433 aa)) are Cytoplasmic-facing. The active-site 4-aspartylphosphate intermediate is Asp374. Residues Ser439, Ser450, Ser496, and Ser559 each carry the phosphoserine modification. The residue at position 570 (Thr570) is a Phosphothreonine. Phosphoserine occurs at positions 587 and 672. Positions 714 and 718 each coordinate Mg(2+). A helical membrane pass occupies residues 770–789 (KKSIAYTLTSNIPEITPFLL). The Extracellular segment spans residues 790–799 (FIIANIPLPL). A helical transmembrane segment spans residues 800-820 (GTVTILCIDLGTDMVPAISLA). The Cytoplasmic portion of the chain corresponds to 821 to 840 (YEAAESDIMKRQPRNSQTDK). A Phosphoserine modification is found at Ser826. A helical membrane pass occupies residues 841-863 (LVNERLISMAYGQIGMIQALGGF). The Extracellular segment spans residues 864 to 915 (FTYFVILAENGFLPSRLLGIRLDWDDRTTNDLEDSYGQEWTYEQRKVVEFTC). The chain crosses the membrane as a helical span at residues 916–935 (HTAFFASIVVVQWADLIICK). At 936 to 948 (TRRNSVFQQGMKN) the chain is on the cytoplasmic side. Position 940 is a phosphoserine; by PKA (Ser940). A helical transmembrane segment spans residues 949–967 (KILIFGLLEETALAAFLSY). Topologically, residues 968–982 (CPGMGVALRMYPLKV) are extracellular. The helical transmembrane segment at 983-1003 (TWWFCAFPYSLLIFIYDEVRK) threads the bilayer. Residues 1004-1020 (LILRRYPGGWVEKETYY) lie on the Cytoplasmic side of the membrane.

This sequence belongs to the cation transport ATPase (P-type) (TC 3.A.3) family. Type IIC subfamily. As to quaternary structure, the sodium/potassium-transporting ATPase is composed of a catalytic alpha subunit, an auxiliary non-catalytic beta subunit and an additional regulatory subunit. Interacts with regulatory subunit FXYD1.

The protein localises to the membrane. It localises to the cell membrane. The enzyme catalyses K(+)(out) + Na(+)(in) + ATP + H2O = K(+)(in) + Na(+)(out) + ADP + phosphate + H(+). Functionally, this is the catalytic component of the active enzyme, which catalyzes the hydrolysis of ATP coupled with the exchange of sodium and potassium ions across the plasma membrane. This action creates the electrochemical gradient of sodium and potassium ions, providing the energy for active transport of various nutrients. The polypeptide is Sodium/potassium-transporting ATPase subunit alpha-2 (Atp1a2) (Mus musculus (Mouse)).